A 368-amino-acid polypeptide reads, in one-letter code: Peptide chain release factor 2 (368 aa).

Glutamine 250 carries the N5-methylglutamine modification.

This sequence belongs to the prokaryotic/mitochondrial release factor family. In terms of processing, methylated by PrmC. Methylation increases the termination efficiency of RF2.

It is found in the cytoplasm. Peptide chain release factor 2 directs the termination of translation in response to the peptide chain termination codons UGA and UAA. This chain is Peptide chain release factor 2, found in Chlamydia trachomatis serovar L2 (strain ATCC VR-902B / DSM 19102 / 434/Bu).